The following is a 168-amino-acid chain: uncharacterized protein (168 aa).

Residues 23-47 (LFARASIIGVALLLSACATVPMASV) form a helical membrane-spanning segment.

Its subcellular location is the membrane. This is an uncharacterized protein from Haemophilus influenzae (strain ATCC 51907 / DSM 11121 / KW20 / Rd).